Reading from the N-terminus, the 754-residue chain is 5-methyltetrahydropteroyltriglutamate--homocysteine methyltransferase (754 aa).

Residues 17-20 (RELK) and K117 each bind 5-methyltetrahydropteroyltri-L-glutamate. L-homocysteine is bound by residues 431 to 433 (IGS) and E484. Residues 431–433 (IGS) and E484 each bind L-methionine. 5-methyltetrahydropteroyltri-L-glutamate-binding positions include 515 to 516 (RC) and W561. L-homocysteine is bound at residue D599. D599 contributes to the L-methionine binding site. Position 605 (E605) interacts with 5-methyltetrahydropteroyltri-L-glutamate. Residues H641, C643, and E665 each coordinate Zn(2+). Residue H694 is the Proton donor of the active site. A Zn(2+)-binding site is contributed by C726.

The protein belongs to the vitamin-B12 independent methionine synthase family. The cofactor is Zn(2+).

It catalyses the reaction 5-methyltetrahydropteroyltri-L-glutamate + L-homocysteine = tetrahydropteroyltri-L-glutamate + L-methionine. Its pathway is amino-acid biosynthesis; L-methionine biosynthesis via de novo pathway; L-methionine from L-homocysteine (MetE route): step 1/1. In terms of biological role, catalyzes the transfer of a methyl group from 5-methyltetrahydrofolate to homocysteine resulting in methionine formation. This Salmonella paratyphi A (strain ATCC 9150 / SARB42) protein is 5-methyltetrahydropteroyltriglutamate--homocysteine methyltransferase.